Consider the following 436-residue polypeptide: Histone acetyltransferase type B subunit 2 (436 aa).

Residues 1–19 show a composition bias toward acidic residues; that stretch reads MEPYDDGFIEEQEEQEEER. Positions 1-22 are disordered; the sequence is MEPYDDGFIEEQEEQEEERTEE. WD repeat units lie at residues 136–176, 187–227, 237–277, 284–324, and 328–368; these read DHKG…SLPT, GHTK…KGNK, HHSS…TTRA, QHRD…TKLH, and CHTD…EEQT. Residues 370–374 form an interaction with the histone H4 N-terminus region; the sequence is DDAQD. A WD 6 repeat occupies 385–425; it reads GHTNRISDFSWNLNDPWVLCSAAEDNLLQVWKVADAIVGKD.

The protein belongs to the WD repeat RBAP46/RBAP48/MSI1 family. Component of the HAT-B complex composed of at least hat1 and hat2. The HAT-B complex binds to histone H4 tail.

The protein localises to the cytoplasm. Its subcellular location is the nucleus. Functionally, regulatory subunit of the histone acetylase B (HAT-B) complex. The complex acetylates 'Lys-12' of histone H4 which is required for telomeric silencing. In Aspergillus oryzae (strain ATCC 42149 / RIB 40) (Yellow koji mold), this protein is Histone acetyltransferase type B subunit 2 (hat2).